The sequence spans 589 residues: Arginine--tRNA ligase (589 aa).

Residues 132-142 (PNTNKPLHVGH) carry the 'HIGH' region motif.

Belongs to the class-I aminoacyl-tRNA synthetase family. In terms of assembly, monomer.

Its subcellular location is the cytoplasm. It catalyses the reaction tRNA(Arg) + L-arginine + ATP = L-arginyl-tRNA(Arg) + AMP + diphosphate. This is Arginine--tRNA ligase from Treponema pallidum subsp. pallidum (strain SS14).